A 97-amino-acid polypeptide reads, in one-letter code: Mitochondrial import inner membrane translocase subunit Tim8 A (97 aa).

Residues 43 to 66 (CWEKCMDKPGPKLDSRAEACFVNC) carry the Twin CX3C motif motif. Cystine bridges form between Cys43–Cys66 and Cys47–Cys62. 4 positions are modified to phosphoserine: Ser57, Ser87, Ser94, and Ser96.

It belongs to the small Tim family. Heterohexamer; composed of 3 copies of TIMM8A and 3 copies of TIMM13, named soluble 70 kDa complex. Associates with the TIM22 complex, whose core is composed of TIMM22. As to expression, present at high level in liver and brain, and at lower level in muscle and heart. In CNS sections, it is predominantly present in the soma and the dendritic portion of the Purkinje cells of the cerebellum, but not in the glial cells. Scattered expression also is also detected in the brain stem, olfactory bulb, substantia nigra, hippocampus and striatum (at protein level). Ubiquitously expressed.

It is found in the mitochondrion inner membrane. Functionally, mitochondrial intermembrane chaperone that participates in the import and insertion of some multi-pass transmembrane proteins into the mitochondrial inner membrane. Also required for the transfer of beta-barrel precursors from the TOM complex to the sorting and assembly machinery (SAM complex) of the outer membrane. Acts as a chaperone-like protein that protects the hydrophobic precursors from aggregation and guide them through the mitochondrial intermembrane space. The TIMM8-TIMM13 complex mediates the import of proteins such as TIMM23, SLC25A12/ARALAR1 and SLC25A13/ARALAR2, while the predominant TIMM9-TIMM10 70 kDa complex mediates the import of much more proteins. The protein is Mitochondrial import inner membrane translocase subunit Tim8 A (Timm8a1) of Mus musculus (Mouse).